A 147-amino-acid chain; its full sequence is Mid1-interacting protein 1-B (147 aa).

Belongs to the SPOT14 family.

It localises to the nucleus. It is found in the cytoplasm. Its subcellular location is the cytoskeleton. Its function is as follows. Involved in stabilization of microtubules. May play a role in the regulation of lipogenesis. The sequence is that of Mid1-interacting protein 1-B from Danio rerio (Zebrafish).